Consider the following 541-residue polypeptide: Tyrosine-protein kinase Yes (541 aa).

A compositionally biased stretch (basic and acidic residues) spans 1-20 (MGCIKSKEDKGPAMKYRTDN). Positions 1-43 (MGCIKSKEDKGPAMKYRTDNTPEPISSHVSHYGSDSSQATQSP) are disordered. Gly-2 is lipidated: N-myristoyl glycine. Residue Cys-3 is the site of S-palmitoyl cysteine; in membrane form attachment. Residues 26-37 (SSHVSHYGSDSS) are compositionally biased toward low complexity. The region spanning 89–150 (GGVTVFVALY…PSNYVAPADS (62 aa)) is the SH3 domain. The SH2 domain occupies 156–253 (WYFGKMGRKD…GLCHKLTTVC (98 aa)). One can recognise a Protein kinase domain in the interval 275 to 528 (LRLEVKLGQG…YIQSFLEDYF (254 aa)). ATP contacts are provided by residues 281 to 289 (LGQGCFGEV) and Lys-303. Catalysis depends on Asp-394, which acts as the Proton acceptor. Tyr-424 bears the Phosphotyrosine; by autocatalysis mark. Residue Tyr-535 is modified to Phosphotyrosine; by CSK.

It belongs to the protein kinase superfamily. Tyr protein kinase family. SRC subfamily. Autophosphorylation at Tyr-424 maintains enzyme activity. Post-translationally, palmitoylation at Cys-3 promotes membrane localization.

The protein resides in the cell membrane. It is found in the cytoplasm. The protein localises to the cytoskeleton. Its subcellular location is the microtubule organizing center. It localises to the centrosome. The protein resides in the cytosol. It is found in the cell junction. The catalysed reaction is L-tyrosyl-[protein] + ATP = O-phospho-L-tyrosyl-[protein] + ADP + H(+). Functionally, non-receptor protein tyrosine kinase that is involved in the regulation of cell growth and survival, apoptosis, cell-cell adhesion, cytoskeleton remodeling, differentiation, G2/M progression and cytokinesis. The sequence is that of Tyrosine-protein kinase Yes (YES1) from Gallus gallus (Chicken).